Here is a 185-residue protein sequence, read N- to C-terminus: Small ribosomal subunit protein uS7 (185 aa).

The protein belongs to the universal ribosomal protein uS7 family. Part of the 30S ribosomal subunit.

One of the primary rRNA binding proteins, it binds directly to 16S rRNA where it nucleates assembly of the head domain of the 30S subunit. Is located at the subunit interface close to the decoding center. This is Small ribosomal subunit protein uS7 from Methanosarcina barkeri (strain Fusaro / DSM 804).